A 693-amino-acid chain; its full sequence is Translation factor GUF1 homolog, mitochondrial (693 aa).

Over residues 51–63 (SSSSTEKPTTSGT) the composition is skewed to polar residues. The segment at 51–78 (SSSSTEKPTTSGTINGGGGKQKAASQPK) is disordered. Residues 88–270 (QKIRNFSIIA…RIVQMVPPPP (183 aa)) form the tr-type G domain. GTP is bound by residues 97-104 (AHIDHGKS), 163-167 (DTPGH), and 217-220 (NKID).

This sequence belongs to the TRAFAC class translation factor GTPase superfamily. Classic translation factor GTPase family. LepA subfamily.

It localises to the mitochondrion inner membrane. The catalysed reaction is GTP + H2O = GDP + phosphate + H(+). Functionally, promotes mitochondrial protein synthesis. May act as a fidelity factor of the translation reaction, by catalyzing a one-codon backward translocation of tRNAs on improperly translocated ribosomes. Binds to mitochondrial ribosomes in a GTP-dependent manner. This chain is Translation factor GUF1 homolog, mitochondrial, found in Phaeodactylum tricornutum (strain CCAP 1055/1).